Here is a 250-residue protein sequence, read N- to C-terminus: Deoxynucleoside kinase (250 aa).

27–35 (GNIGSGKTT) is a binding site for ATP. Substrate contacts are provided by glutamate 52, tyrosine 70, and glutamine 81. The active-site Proton acceptor is the glutamate 104. Substrate-binding residues include arginine 105 and glutamate 172. A phosphoserine mark is found at serine 236, serine 241, and serine 243.

It belongs to the DCK/DGK family. As to quaternary structure, monomer.

The enzyme catalyses a 2'-deoxyribonucleoside + ATP = a 2'-deoxyribonucleoside 5'-phosphate + ADP + H(+). Subject to feedback inhibition by dTTP. Deoxyribonucleoside kinase that has a broad specificity phosphorylating thymidine, 2'-deoxyriboadenosine, 2'-deoxyribocytidine and 2'-deoxyriboguanosine. Specificity is higher for pyrimidine nucleosides. Several anti-viral and anti-cancer nucleoside analogs are also efficiently phosphorylated. The sequence is that of Deoxynucleoside kinase (dnk) from Drosophila melanogaster (Fruit fly).